A 322-amino-acid polypeptide reads, in one-letter code: Nuclease 1, mitochondrial (322 aa).

His142 acts as the Proton acceptor in catalysis. Asn174 contacts Mg(2+).

This sequence belongs to the DNA/RNA non-specific endonuclease family. In terms of assembly, homodimer. Requires Mn(2+) as cofactor. Mg(2+) serves as cofactor.

The protein resides in the mitochondrion inner membrane. In terms of biological role, this enzyme has both RNase and DNase activity. It degrades single-stranded DNA and RNA. This Schizosaccharomyces pombe (strain 972 / ATCC 24843) (Fission yeast) protein is Nuclease 1, mitochondrial (pnu1).